Here is a 153-residue protein sequence, read N- to C-terminus: Arginine repressor (153 aa).

The protein belongs to the ArgR family.

Its subcellular location is the cytoplasm. It participates in amino-acid biosynthesis; L-arginine biosynthesis [regulation]. Its function is as follows. Regulates arginine biosynthesis genes. This Actinobacillus pleuropneumoniae serotype 3 (strain JL03) protein is Arginine repressor.